The primary structure comprises 949 residues: MAM domain-containing glycosylphosphatidylinositol anchor protein 2 (949 aa).

The N-terminal stretch at 1-25 (MDLVYGLVWLLTVLLEGISGQGVYA) is a signal peptide. 2 consecutive Ig-like domains span residues 27–127 (PTVR…IRVD) and 134–232 (PVVT…KMVS). Disulfide bonds link Cys62-Cys110 and Cys159-Cys216. Asn92, Asn213, and Asn237 each carry an N-linked (GlcNAc...) asparagine glycan. Ig-like domains lie at 242 to 328 (PSIK…NIIV), 340 to 436 (PDPY…VNIS), 442 to 533 (PNLT…ALVQ), and 540 to 627 (PAVE…FLVT). Disulfide bonds link Cys264–Cys310 and Cys359–Cys417. Asn434, Asn443, Asn504, Asn610, and Asn703 each carry an N-linked (GlcNAc...) asparagine glycan. Cystine bridges form between Cys465/Cys515 and Cys561/Cys611. The Fibronectin type-III domain maps to 638 to 738 (DTYNPVWQNR…TIRVIKYTGE (101 aa)). In terms of domain architecture, MAM spans 739–914 (FHCGFEDGNI…VSIAEGECAK (176 aa)). Asp924 carries GPI-anchor amidated aspartate lipidation. Positions 925 to 949 (GAVGILVHIWLFPVIILISILSPRR) are cleaved as a propeptide — removed in mature form.

Interacts (through the Ig-like domains) with NLGN2. In terms of tissue distribution, expressed predominantly in neuronal tissue. Expressed in brain.

It localises to the cell membrane. May be involved in cell-cell interactions. This chain is MAM domain-containing glycosylphosphatidylinositol anchor protein 2 (Mdga2), found in Rattus norvegicus (Rat).